Reading from the N-terminus, the 720-residue chain is Polyribonucleotide nucleotidyltransferase (720 aa).

Asp-487 and Asp-493 together coordinate Mg(2+). In terms of domain architecture, KH spans 554-613 (PRIETFKIPTDKIREVIGTGGKVIREIVEKTGAKVNIEDDGTVKVASSDGEAMKAAIKWI). An S1 motif domain is found at 623-691 (GQIYDGTVVK…DRGKTRLSMK (69 aa)). The tract at residues 699-720 (EDLEAKDKVAEGEKAPREAAGE) is disordered. The segment covering 701-720 (LEAKDKVAEGEKAPREAAGE) has biased composition (basic and acidic residues).

Belongs to the polyribonucleotide nucleotidyltransferase family. The cofactor is Mg(2+).

The protein localises to the cytoplasm. It catalyses the reaction RNA(n+1) + phosphate = RNA(n) + a ribonucleoside 5'-diphosphate. Involved in mRNA degradation. Catalyzes the phosphorolysis of single-stranded polyribonucleotides processively in the 3'- to 5'-direction. This Bradyrhizobium diazoefficiens (strain JCM 10833 / BCRC 13528 / IAM 13628 / NBRC 14792 / USDA 110) protein is Polyribonucleotide nucleotidyltransferase.